The sequence spans 310 residues: HPr kinase/phosphorylase (310 aa).

Active-site residues include His138 and Lys159. An ATP-binding site is contributed by 153 to 160; that stretch reads GKSGVGKS. Position 160 (Ser160) interacts with Mg(2+). Residue Asp177 is the Proton acceptor; for phosphorylation activity. Proton donor; for dephosphorylation activity of the active site. The segment at 201 to 210 is important for the catalytic mechanism of both phosphorylation and dephosphorylation; it reads LEIRGLGIIN. A Mg(2+)-binding site is contributed by Glu202. Residue Arg243 is part of the active site. Residues 264 to 269 form an important for the catalytic mechanism of dephosphorylation region; the sequence is PVRPGR.

It belongs to the HPrK/P family. Homohexamer. Mg(2+) is required as a cofactor.

It catalyses the reaction [HPr protein]-L-serine + ATP = [HPr protein]-O-phospho-L-serine + ADP + H(+). The catalysed reaction is [HPr protein]-O-phospho-L-serine + phosphate + H(+) = [HPr protein]-L-serine + diphosphate. Its function is as follows. Catalyzes the ATP- as well as the pyrophosphate-dependent phosphorylation of a specific serine residue in HPr, a phosphocarrier protein of the phosphoenolpyruvate-dependent sugar phosphotransferase system (PTS). HprK/P also catalyzes the pyrophosphate-producing, inorganic phosphate-dependent dephosphorylation (phosphorolysis) of seryl-phosphorylated HPr (P-Ser-HPr). The two antagonistic activities of HprK/P are regulated by several intracellular metabolites, which change their concentration in response to the absence or presence of rapidly metabolisable carbon sources (glucose, fructose, etc.) in the growth medium. Also phosphorylates/dephosphorylates the HPr-like catabolite repression protein crh on a specific serine residue. Therefore, by controlling the phosphorylation state of HPr and crh, HPrK/P is a sensor enzyme that plays a major role in the regulation of carbon metabolism and sugar transport: it mediates carbon catabolite repression (CCR), and regulates PTS-catalyzed carbohydrate uptake and inducer exclusion. The protein is HPr kinase/phosphorylase of Bacillus pumilus (strain SAFR-032).